Here is a 237-residue protein sequence, read N- to C-terminus: Probable transcriptional regulatory protein EAT1b_0153 (237 aa).

The protein belongs to the TACO1 family. YeeN subfamily.

It is found in the cytoplasm. In Exiguobacterium sp. (strain ATCC BAA-1283 / AT1b), this protein is Probable transcriptional regulatory protein EAT1b_0153.